The following is a 227-amino-acid chain: Enolase-phosphatase E1 (227 aa).

The protein belongs to the HAD-like hydrolase superfamily. MasA/MtnC family. Monomer. Mg(2+) serves as cofactor.

The enzyme catalyses 5-methylsulfanyl-2,3-dioxopentyl phosphate + H2O = 1,2-dihydroxy-5-(methylsulfanyl)pent-1-en-3-one + phosphate. Its pathway is amino-acid biosynthesis; L-methionine biosynthesis via salvage pathway; L-methionine from S-methyl-5-thio-alpha-D-ribose 1-phosphate: step 3/6. The protein operates within amino-acid biosynthesis; L-methionine biosynthesis via salvage pathway; L-methionine from S-methyl-5-thio-alpha-D-ribose 1-phosphate: step 4/6. Its function is as follows. Bifunctional enzyme that catalyzes the enolization of 2,3-diketo-5-methylthiopentyl-1-phosphate (DK-MTP-1-P) into the intermediate 2-hydroxy-3-keto-5-methylthiopentenyl-1-phosphate (HK-MTPenyl-1-P), which is then dephosphorylated to form the acireductone 1,2-dihydroxy-3-keto-5-methylthiopentene (DHK-MTPene). In Gluconobacter oxydans (strain 621H) (Gluconobacter suboxydans), this protein is Enolase-phosphatase E1.